Consider the following 407-residue polypeptide: Peptidase T (407 aa).

His-81 is a binding site for Zn(2+). Asp-83 is a catalytic residue. Zn(2+) is bound at residue Asp-142. Glu-176 serves as the catalytic Proton acceptor. Residues Glu-177, Asp-199, and His-381 each coordinate Zn(2+).

It belongs to the peptidase M20B family. Zn(2+) is required as a cofactor.

The protein resides in the cytoplasm. The enzyme catalyses Release of the N-terminal residue from a tripeptide.. In terms of biological role, cleaves the N-terminal amino acid of tripeptides. The protein is Peptidase T of Streptococcus pneumoniae (strain Hungary19A-6).